We begin with the raw amino-acid sequence, 571 residues long: Methionine--tRNA ligase (571 aa).

The short motif at 10-20 (PYVNAVPHLGN) is the 'HIGH' region element. Positions 143, 146, 156, and 159 each coordinate Zn(2+). The 'KMSKS' region motif lies at 333–337 (KFSKS). K336 lines the ATP pocket.

Belongs to the class-I aminoacyl-tRNA synthetase family. MetG type 1 subfamily. It depends on Zn(2+) as a cofactor.

It is found in the cytoplasm. The enzyme catalyses tRNA(Met) + L-methionine + ATP = L-methionyl-tRNA(Met) + AMP + diphosphate. Its function is as follows. Is required not only for elongation of protein synthesis but also for the initiation of all mRNA translation through initiator tRNA(fMet) aminoacylation. This is Methionine--tRNA ligase from Sulfurisphaera tokodaii (strain DSM 16993 / JCM 10545 / NBRC 100140 / 7) (Sulfolobus tokodaii).